Here is a 117-residue protein sequence, read N- to C-terminus: Ig heavy chain V region 102 (117 aa).

The signal sequence occupies residues 1–19 (MGWSCIILFLVATATGVHS). Residues 20–49 (HVQLQQPGAELVKPGASVKVSCKASGYTFT) form a framework-1 region. A disulfide bridge connects residues Cys-41 and Cys-115. The segment at 50–54 (SYWMH) is complementarity-determining-1. Positions 55–68 (WVKQRPGQGLEWIG) are framework-2. Positions 69-85 (RIHPSDSDTNYNQKFKG) are complementarity-determining-2. The segment at 86-117 (KATLTVDKSSSTAYMQLSSLTSEDSAVYYCAI) is framework-3.

The chain is Ig heavy chain V region 102 from Mus musculus (Mouse).